A 47-amino-acid polypeptide reads, in one-letter code: PhoP/PhoQ regulator MgrB (47 aa).

A helical membrane pass occupies residues 6–26; the sequence is WLVLIVVVLACLVLWAQVINI.

It belongs to the MgrB family. In terms of assembly, may form homooligomers. Probably interacts with the periplasmic domain of PhoQ.

It is found in the cell inner membrane. Its function is as follows. PhoP-regulated transcription is redox-sensitive, being activated when the periplasm becomes more reducing. MgrB acts between DsbA/DsbB and PhoP/PhoQ in this pathway. Represses PhoP/PhoQ signaling, possibly by binding to the periplasmic domain of PhoQ, altering its activity and that of downstream effector PhoP. The sequence is that of PhoP/PhoQ regulator MgrB from Escherichia fergusonii (strain ATCC 35469 / DSM 13698 / CCUG 18766 / IAM 14443 / JCM 21226 / LMG 7866 / NBRC 102419 / NCTC 12128 / CDC 0568-73).